The primary structure comprises 194 residues: Crossover junction endodeoxyribonuclease RuvC (194 aa).

Residues Asp-8, Glu-72, and Asp-144 contribute to the active site. Mg(2+)-binding residues include Asp-8, Glu-72, and Asp-144.

It belongs to the RuvC family. As to quaternary structure, homodimer which binds Holliday junction (HJ) DNA. The HJ becomes 2-fold symmetrical on binding to RuvC with unstacked arms; it has a different conformation from HJ DNA in complex with RuvA. In the full resolvosome a probable DNA-RuvA(4)-RuvB(12)-RuvC(2) complex forms which resolves the HJ. Requires Mg(2+) as cofactor.

It localises to the cytoplasm. The enzyme catalyses Endonucleolytic cleavage at a junction such as a reciprocal single-stranded crossover between two homologous DNA duplexes (Holliday junction).. The RuvA-RuvB-RuvC complex processes Holliday junction (HJ) DNA during genetic recombination and DNA repair. Endonuclease that resolves HJ intermediates. Cleaves cruciform DNA by making single-stranded nicks across the HJ at symmetrical positions within the homologous arms, yielding a 5'-phosphate and a 3'-hydroxyl group; requires a central core of homology in the junction. The consensus cleavage sequence is 5'-(A/T)TT(C/G)-3'. Cleavage occurs on the 3'-side of the TT dinucleotide at the point of strand exchange. HJ branch migration catalyzed by RuvA-RuvB allows RuvC to scan DNA until it finds its consensus sequence, where it cleaves and resolves the cruciform DNA. This chain is Crossover junction endodeoxyribonuclease RuvC, found in Psychrobacter sp. (strain PRwf-1).